The chain runs to 369 residues: Chorismate synthase (369 aa).

2 residues coordinate NADP(+): arginine 48 and arginine 54. Residues 125-127 (RSS), 238-239 (NA), glycine 278, 293-297 (KPTSS), and arginine 319 contribute to the FMN site.

This sequence belongs to the chorismate synthase family. In terms of assembly, homotetramer. The cofactor is FMNH2.

It catalyses the reaction 5-O-(1-carboxyvinyl)-3-phosphoshikimate = chorismate + phosphate. It functions in the pathway metabolic intermediate biosynthesis; chorismate biosynthesis; chorismate from D-erythrose 4-phosphate and phosphoenolpyruvate: step 7/7. Its function is as follows. Catalyzes the anti-1,4-elimination of the C-3 phosphate and the C-6 proR hydrogen from 5-enolpyruvylshikimate-3-phosphate (EPSP) to yield chorismate, which is the branch point compound that serves as the starting substrate for the three terminal pathways of aromatic amino acid biosynthesis. This reaction introduces a second double bond into the aromatic ring system. This is Chorismate synthase from Cupriavidus necator (strain ATCC 17699 / DSM 428 / KCTC 22496 / NCIMB 10442 / H16 / Stanier 337) (Ralstonia eutropha).